We begin with the raw amino-acid sequence, 341 residues long: L-threonine 3-dehydrogenase (341 aa).

C38 is a binding site for Zn(2+). Catalysis depends on charge relay system residues T40 and H43. Zn(2+) contacts are provided by H63, E64, C93, C96, C99, and C107. NAD(+)-binding positions include I175, D195, R200, 262 to 264 (LGI), and 286 to 287 (IY).

This sequence belongs to the zinc-containing alcohol dehydrogenase family. As to quaternary structure, homotetramer. The cofactor is Zn(2+).

Its subcellular location is the cytoplasm. The enzyme catalyses L-threonine + NAD(+) = (2S)-2-amino-3-oxobutanoate + NADH + H(+). It participates in amino-acid degradation; L-threonine degradation via oxydo-reductase pathway; glycine from L-threonine: step 1/2. In terms of biological role, catalyzes the NAD(+)-dependent oxidation of L-threonine to 2-amino-3-ketobutyrate. The polypeptide is L-threonine 3-dehydrogenase (Yersinia pseudotuberculosis serotype O:1b (strain IP 31758)).